A 548-amino-acid polypeptide reads, in one-letter code: Chaperonin GroEL (548 aa).

Residues 29-32 (TLGP), Lys-50, 86-90 (DGTTT), Gly-413, 479-481 (NAA), and Asp-496 contribute to the ATP site.

This sequence belongs to the chaperonin (HSP60) family. As to quaternary structure, forms a cylinder of 14 subunits composed of two heptameric rings stacked back-to-back. Interacts with the co-chaperonin GroES.

It localises to the cytoplasm. It carries out the reaction ATP + H2O + a folded polypeptide = ADP + phosphate + an unfolded polypeptide.. Its function is as follows. Together with its co-chaperonin GroES, plays an essential role in assisting protein folding. The GroEL-GroES system forms a nano-cage that allows encapsulation of the non-native substrate proteins and provides a physical environment optimized to promote and accelerate protein folding. The protein is Chaperonin GroEL of Deinococcus radiodurans (strain ATCC 13939 / DSM 20539 / JCM 16871 / CCUG 27074 / LMG 4051 / NBRC 15346 / NCIMB 9279 / VKM B-1422 / R1).